Consider the following 56-residue polypeptide: UPF0434 protein CbuG_1535 (56 aa).

Belongs to the UPF0434 family.

This Coxiella burnetii (strain CbuG_Q212) (Coxiella burnetii (strain Q212)) protein is UPF0434 protein CbuG_1535.